Here is a 119-residue protein sequence, read N- to C-terminus: Large ribosomal subunit protein uL18 (119 aa).

Positions 1-25 are disordered; the sequence is MITKIDKNKVRKKRHARVRSKISGT. Residues 9–20 show a composition bias toward basic residues; the sequence is KVRKKRHARVRS.

This sequence belongs to the universal ribosomal protein uL18 family. Part of the 50S ribosomal subunit; part of the 5S rRNA/L5/L18/L25 subcomplex. Contacts the 5S and 23S rRNAs.

Its function is as follows. This is one of the proteins that bind and probably mediate the attachment of the 5S RNA into the large ribosomal subunit, where it forms part of the central protuberance. This Listeria innocua serovar 6a (strain ATCC BAA-680 / CLIP 11262) protein is Large ribosomal subunit protein uL18.